The chain runs to 545 residues: Baeyer-Villiger monooxygenase (545 aa).

The FAD site is built by phenylalanine 24, aspartate 45, tryptophan 54, aspartate 65, tyrosine 71, and valine 118.

The protein belongs to the FAD-binding monooxygenase family. The cofactor is FAD.

Functionally, catalyzes a Baeyer-Villiger oxidation reaction, i.e. the insertion of an oxygen atom into a carbon-carbon bond adjacent to a carbonyl, which converts ketones to esters or lactones using NADPH as an electron donor. Besides cycloalkanones, can use cyclic alpha,beta-unsaturated ketones as substrates, leading to conjugated ene-lactones. Can also act on methylated cycloalkanones and methylated cycloalkenones with high enantioselectivity in some cases. In Pseudooceanicola batsensis (strain ATCC BAA-863 / DSM 15984 / KCTC 12145 / HTCC2597) (Oceanicola batsensis), this protein is Baeyer-Villiger monooxygenase.